The sequence spans 66 residues: U1-theraphotoxin-Cg1d 2 (66 aa).

Positions 1 to 21 (MKMSALFPIFGLPLLFCNSFA) are cleaved as a signal peptide. A propeptide spanning residues 22–29 (AELKATGR) is cleaved from the precursor. Intrachain disulfides connect C31-C46, C38-C51, and C45-C58. P63 carries the proline amide modification.

The protein belongs to the neurotoxin 10 (Hwtx-1) family. 46 (Jztx-7/10/12) subfamily. As to expression, expressed by the venom gland.

The protein localises to the secreted. Its function is as follows. Probable ion channel inhibitor. The sequence is that of U1-theraphotoxin-Cg1d 2 from Chilobrachys guangxiensis (Chinese earth tiger tarantula).